A 163-amino-acid polypeptide reads, in one-letter code: NADH-quinone oxidoreductase subunit I (163 aa).

2 4Fe-4S ferredoxin-type domains span residues 53–83 (LRRY…IEAG) and 94–123 (VRYD…EGPN). Positions 63, 66, 69, 73, 103, 106, 109, and 113 each coordinate [4Fe-4S] cluster.

The protein belongs to the complex I 23 kDa subunit family. NDH-1 is composed of 14 different subunits. Subunits NuoA, H, J, K, L, M, N constitute the membrane sector of the complex. [4Fe-4S] cluster serves as cofactor.

It localises to the cell inner membrane. The catalysed reaction is a quinone + NADH + 5 H(+)(in) = a quinol + NAD(+) + 4 H(+)(out). In terms of biological role, NDH-1 shuttles electrons from NADH, via FMN and iron-sulfur (Fe-S) centers, to quinones in the respiratory chain. The immediate electron acceptor for the enzyme in this species is believed to be ubiquinone. Couples the redox reaction to proton translocation (for every two electrons transferred, four hydrogen ions are translocated across the cytoplasmic membrane), and thus conserves the redox energy in a proton gradient. The polypeptide is NADH-quinone oxidoreductase subunit I (Rhizobium johnstonii (strain DSM 114642 / LMG 32736 / 3841) (Rhizobium leguminosarum bv. viciae)).